Here is a 30-residue protein sequence, read N- to C-terminus: ERGCPRILKQCKQDSDCPGECICMAHGFCG.

Cystine bridges form between Cys-4–Cys-21, Cys-11–Cys-23, and Cys-17–Cys-29.

The protein belongs to the protease inhibitor I7 (squash-type serine protease inhibitor) family.

The protein resides in the secreted. Its function is as follows. Inhibits trypsin. The protein is Trypsin inhibitor 3 of Momordica charantia (Bitter gourd).